Consider the following 918-residue polypeptide: MQPSEQPAARKKLTPVMRQYEDAKALHPDAILFFRMGDFYEMFNDDAVLVSRALNLTLTSRNKGEPDESPMAGVPHHAAHGYIARLLALGHKVAICEQCGDPSKIKGLVPRQVVRVVTPGLVTETEQLDARANHYLAAVDGGGAPRGDALGAGGPYGLSLLDLSTGELSATSVPDAATLLAELARADPREALIARDLPDVRAAAASLACRAALRDDEELDSAHVASILDDAAIEPISAAALAEHPLPAVRAAARALRFARRCSPGARIPVRRIAPHDTSGTLRIDETAQAHLELVRAADGGRRGTLLDVIDCTVTPGGARLLRRRLLSPLADLAGIRRRLDEVELFVSHPRARGELRQALGGVGDLERLSVRALLGEATPRDLGLLRDGLTAAPAAIAAVRSIPDLGKAAARSDDGAAARGKDGAAAGSSSGSEPLLAEAAALDVVADVCAELTAALIERPPPNTREGGIFREGYDKELDDARGVEKNATELILALEAKLRTQTGAPSLRVKYTRVFGWYIEVTRAHIAKVPETFRRKQTVATGERYTSDELDELADKIEHAGARALERETALFDRLRALVAKSEGRLRALARKLAAWDVAAALADVAHRNDYVRPHVTAGEALAIRDGRHPVVERYAAAGHFVPNDTRLDLSGERLWLITGPNMAGKSTLMRQVALIVVLAQMGSYVPAREAEIGLVDRILSRVGASDNVARGESTFMVEMRETAEILRDATRRSLVILDEIGRGTSTYDGLAIAWAVAEHLFDAIGCRALFATHYHELTELSARAPGIANYSVAAREHGDDVIFLHKLEAGPASRSYGVAVARLAGVPEGVLARARAILATLESGAALPGGKHASLRGRTRGGAAQLDLFAPAQAAVPPEQSAVIETLRAVDVDRLAPLDALRLVAKLKGLLGGGG.

662–669 (GPNMAGKS) contributes to the ATP binding site.

This sequence belongs to the DNA mismatch repair MutS family.

This protein is involved in the repair of mismatches in DNA. It is possible that it carries out the mismatch recognition step. This protein has a weak ATPase activity. This chain is DNA mismatch repair protein MutS, found in Sorangium cellulosum (strain So ce56) (Polyangium cellulosum (strain So ce56)).